The sequence spans 290 residues: Glutamate racemase (290 aa).

Residues 32-33 (DS) and 64-65 (YG) each bind substrate. The Proton donor/acceptor role is filled by cysteine 96. Residue 97–98 (NT) participates in substrate binding. Catalysis depends on cysteine 208, which acts as the Proton donor/acceptor. 209 to 210 (TH) provides a ligand contact to substrate.

This sequence belongs to the aspartate/glutamate racemases family.

The enzyme catalyses L-glutamate = D-glutamate. It participates in cell wall biogenesis; peptidoglycan biosynthesis. Provides the (R)-glutamate required for cell wall biosynthesis. The protein is Glutamate racemase of Sodalis glossinidius (strain morsitans).